A 253-amino-acid chain; its full sequence is Triosephosphate isomerase (253 aa).

Position 9-11 (9-11) interacts with substrate; that stretch reads NWK. His98 functions as the Electrophile in the catalytic mechanism. Glu170 functions as the Proton acceptor in the catalytic mechanism. Substrate contacts are provided by residues Gly176, Ser216, and 237-238; that span reads GG.

The protein belongs to the triosephosphate isomerase family. Homodimer.

It is found in the cytoplasm. It carries out the reaction D-glyceraldehyde 3-phosphate = dihydroxyacetone phosphate. The protein operates within carbohydrate biosynthesis; gluconeogenesis. It participates in carbohydrate degradation; glycolysis; D-glyceraldehyde 3-phosphate from glycerone phosphate: step 1/1. Its function is as follows. Involved in the gluconeogenesis. Catalyzes stereospecifically the conversion of dihydroxyacetone phosphate (DHAP) to D-glyceraldehyde-3-phosphate (G3P). This Amoebophilus asiaticus (strain 5a2) protein is Triosephosphate isomerase.